Here is a 331-residue protein sequence, read N- to C-terminus: Vitamin B12 import system permease protein BtuC (331 aa).

The next 9 membrane-spanning stretches (helical) occupy residues 20–42 (VMLA…FLSP), 62–84 (LVAA…VLLG), 91–113 (GVLG…LPVM), 117–136 (TVFM…ILVG), 148–170 (MLLV…FYFS), 190–209 (SWHH…WLCL), 240–262 (LAIS…VGLV), 277–296 (FLLP…SDIW), and 303–325 (SAEL…WMLI).

This sequence belongs to the binding-protein-dependent transport system permease family. FecCD subfamily. As to quaternary structure, the complex is composed of two ATP-binding proteins (BtuD), two transmembrane proteins (BtuC) and a solute-binding protein (BtuF).

Its subcellular location is the cell inner membrane. Part of the ABC transporter complex BtuCDF involved in vitamin B12 import. Involved in the translocation of the substrate across the membrane. This chain is Vitamin B12 import system permease protein BtuC, found in Vibrio vulnificus (strain CMCP6).